The primary structure comprises 523 residues: Cytochrome P450 monooxygenase ple5B (523 aa).

Residues 16-33 (IAAAAAGSAVAVYKLLQL) traverse the membrane as a helical segment. Residues Asn-82, Asn-103, Asn-122, Asn-295, Asn-379, and Asn-423 are each glycosylated (N-linked (GlcNAc...) asparagine). Cys-446 is a binding site for heme.

The protein belongs to the cytochrome P450 family. Heme serves as cofactor.

It localises to the membrane. The protein operates within secondary metabolite biosynthesis; terpenoid biosynthesis. Functionally, cytochrome P450 monooxygenase; part of the gene cluster that mediates the biosynthesis of pleuromutilin, a tricyclic diterpene showing antibacterial properties. The geranylgeranyl diphosphate (GGPP) synthase ple4 catalyzes the first step in pleuromutilin biosynthesis. GGPP is then substrate of the premutilin synthase (PS) ple3 to yield premutilin. Premutilin synthase is a bifunctional enzyme composed of the fusion of a class II diterpene cyclase (DTC) and a class I diterpene synthase (DTS), with the corresponding domains and active sites containing characteristic aspartate-rich motifs. GGPP is first converted to mutildienyl-diphosphate (MPP) at the class II DTC site. MPP is subsequently further cyclized at the class I DTS site, followed by a 1,5-hydride shift and addition of water prior to terminating deprotonation, to yield premutilin. The cytochrome P450 monooxygenases ple5 and ple6 hydroxylate premutilin at C-11 and C-3, respectively, producing 11-hydroxypremutilin and 3-hydroxypremutilin. The combination of the actions of both ple5 and ple6 leads to the production of 3,11-dihydroxypremutilin. The short chain dehydrogenase ple7 further converts 3,11-dihydroxypremutilin into mutilin. The acetyltransferase ple2 then acetylates mutilin to produce 14-O-acetylmutilin. Finally, the cytochrome P450 monooxygenase ple1 catalyzes hydroxylation on the alpha position of the acetyl side chain of 14-O-acetylmutilin to yield pleuromutilin. The chain is Cytochrome P450 monooxygenase ple5B from Rhodocybe pseudopiperita (Clitopilus pseudopiperitus).